The following is a 368-amino-acid chain: Peptide chain release factor 2 (368 aa).

The residue at position 249 (Gln249) is an N5-methylglutamine.

This sequence belongs to the prokaryotic/mitochondrial release factor family. In terms of processing, methylated by PrmC. Methylation increases the termination efficiency of RF2.

Its subcellular location is the cytoplasm. Its function is as follows. Peptide chain release factor 2 directs the termination of translation in response to the peptide chain termination codons UGA and UAA. The polypeptide is Peptide chain release factor 2 (Rhodococcus erythropolis (strain PR4 / NBRC 100887)).